A 78-amino-acid polypeptide reads, in one-letter code: Metallothionein-like protein type 2 (78 aa).

The protein belongs to the metallothionein superfamily. Type 15 family.

In terms of biological role, metallothioneins have a high content of cysteine residues that bind various heavy metals. The protein is Metallothionein-like protein type 2 of Nicotiana glutinosa (Tobacco).